The following is a 468-amino-acid chain: 6-phosphogluconate dehydrogenase, decarboxylating (468 aa).

NADP(+)-binding positions include 9-14, 32-34, 73-75, and N101; these read GLAVMG, NRS, and VQA. Substrate-binding positions include N101 and 127 to 129; that span reads SGG. Residue K182 is the Proton acceptor of the active site. Residue 185-186 participates in substrate binding; sequence HN. E189 serves as the catalytic Proton donor. Residues Y190, K259, R286, R444, and H450 each coordinate substrate.

Belongs to the 6-phosphogluconate dehydrogenase family. Homodimer.

It catalyses the reaction 6-phospho-D-gluconate + NADP(+) = D-ribulose 5-phosphate + CO2 + NADPH. It functions in the pathway carbohydrate degradation; pentose phosphate pathway; D-ribulose 5-phosphate from D-glucose 6-phosphate (oxidative stage): step 3/3. Functionally, catalyzes the oxidative decarboxylation of 6-phosphogluconate to ribulose 5-phosphate and CO(2), with concomitant reduction of NADP to NADPH. This is 6-phosphogluconate dehydrogenase, decarboxylating (gnd) from Staphylococcus aureus (strain Mu50 / ATCC 700699).